Here is a 467-residue protein sequence, read N- to C-terminus: Gamma-aminobutyric acid receptor subunit gamma-2 (467 aa).

Residues 1–39 (MSSPNIWSTGSSVYSTPVFSQKMTVWILLLLSLYPGFTS) form the signal peptide. The Extracellular portion of the chain corresponds to 40–275 (QKSDDDYEDY…FDLSRRMGYF (236 aa)). N52 and N129 each carry an N-linked (GlcNAc...) asparagine glycan. A disulfide bridge links C190 with C204. An N-linked (GlcNAc...) asparagine glycan is attached at N247. Residues 276–296 (TIQTYIPCTLIVVLSWVSFWI) form a helical membrane-spanning segment. Topologically, residues 297–302 (NKDAVP) are cytoplasmic. A helical transmembrane segment spans residues 303–322 (ARTSLGITTVLTMTTLSTIA). Residues 323-334 (RKSLPKVSYVTA) are Extracellular-facing. A helical transmembrane segment spans residues 335–359 (MDLFVSVCFIFVFSALVEYGTLHYF). The Cytoplasmic portion of the chain corresponds to 360–443 (VSNRKPSKDK…IHIRIAKMDS (84 aa)). The tract at residues 425–442 (RTGAWRHGRIHIRIAKMD) is interaction with GABARAP. Residues 444–464 (YARIFFPTAFCLFNLVYWVSY) traverse the membrane as a helical segment. Over 465 to 467 (LYL) the chain is Extracellular.

Belongs to the ligand-gated ion channel (TC 1.A.9) family. Gamma-aminobutyric acid receptor (TC 1.A.9.5) subfamily. GABRG2 sub-subfamily. As to quaternary structure, heteropentamer, formed by a combination of alpha (GABRA1-6), beta (GABRB1-3), gamma (GABRG1-3), delta (GABRD), epsilon (GABRE), rho (GABRR1-3), pi (GABRP) and theta (GABRQ) chains, each subunit exhibiting distinct physiological and pharmacological properties. Interacts with GABARAP. Interacts with KIF21B. Identified in a complex of 720 kDa composed of LHFPL4, NLGN2, GABRA1, GABRB2, GABRG2 and GABRB3. Interacts with LHFPL4. Interacts with SHISA7; interaction leads to the regulation of GABA(A) receptor trafficking, channel deactivation kinetics and pharmacology. In terms of processing, palmitoylated by ZDHHC3/GODZ; required for the accumulation of GABA(A) receptors at the postsynaptic membrane of inhibitory GABAergic synapses. Glycosylated.

It is found in the postsynaptic cell membrane. The protein resides in the cell membrane. It localises to the cell projection. The protein localises to the dendrite. Its subcellular location is the cytoplasmic vesicle membrane. The enzyme catalyses chloride(in) = chloride(out). With respect to regulation, allosterically activated by benzodiazepines. Activated by pentobarbital. Inhibited by the antagonist bicuculline. Inhibited by zinc ions. Potentiated by histamine. Functionally, gamma subunit of the heteropentameric ligand-gated chloride channel gated by gamma-aminobutyric acid (GABA), a major inhibitory neurotransmitter in the brain. GABA-gated chloride channels, also named GABA(A) receptors (GABAAR), consist of five subunits arranged around a central pore and contain GABA active binding site(s) located at the alpha and beta subunit interface(s). When activated by GABA, GABAARs selectively allow the flow of chloride anions across the cell membrane down their electrochemical gradient. Gamma-2/GABRG2-containing GABAARs are found at both synaptic and extrasynaptic sites. Chloride influx into the postsynaptic neuron following GABAAR opening decreases the neuron ability to generate a new action potential, thereby reducing nerve transmission. GABAARs containing alpha-1 and beta-2 or -3 subunits exhibit synaptogenic activity; the gamma-2 subunit being necessary but not sufficient to induce rapid synaptic contacts formation. Extrasynaptic gamma-2-containing receptors contribute to the tonic GABAergic inhibition. GABAARs function also as histamine receptor where histamine binds at the interface of two neighboring beta subunits and potentiates GABA response in a gamma-2 subunit-controlled manner. This chain is Gamma-aminobutyric acid receptor subunit gamma-2 (GABRG2), found in Pongo abelii (Sumatran orangutan).